Here is a 312-residue protein sequence, read N- to C-terminus: MEDRREALISKLMNMLVENGFSVSGTGFQPVATFDIVARRDVERYILKVLYNIDTLKQSTAYQLIKLAKLLRATAAIIGERTGNGQLEDGVVYYRHGVPISSVNTFESYLNGERPYIYSGPGGFYVRINGELLRERRNELNLSIGNISSYLGVSRRSVSLYENGSAATIDIFIRLRNILKADIVDHIDLFRINSTEINFEEKISDEYIARIIWLLQKYGLDTRPIFKVPFDIVAKDSDEISLIAALIGDAPEPERVRILKKISDVFEDDAFLVSKSNTYRESIGGCAVLTISDLESIEDKDALIGKIEKRAK.

Residues 133–186 (LRERRNELNLSIGNISSYLGVSRRSVSLYENGSAATIDIFIRLRNILKADIVDH) form the HTH cro/C1-type domain. The segment at residues 144-163 (IGNISSYLGVSRRSVSLYEN) is a DNA-binding region (H-T-H motif).

This is Putative HTH-type transcriptional regulatory protein TV0294 from Thermoplasma volcanium (strain ATCC 51530 / DSM 4299 / JCM 9571 / NBRC 15438 / GSS1).